A 90-amino-acid polypeptide reads, in one-letter code: Long neurotoxin OH-34 (90 aa).

An N-terminal signal peptide occupies residues K1–T20. 5 disulfide bridges follow: C23–C41, C34–C62, C47–C51, C66–C77, and C78–C83.

The protein belongs to the three-finger toxin family. Long-chain subfamily. Type II alpha-neurotoxin sub-subfamily. Expressed by the venom gland.

It is found in the secreted. Binds with high affinity to muscular (alpha-1/CHRNA1) and neuronal (alpha-7/CHRNA7) nicotinic acetylcholine receptor (nAChR) and inhibits acetylcholine from binding to the receptor, thereby impairing neuromuscular and neuronal transmission. The sequence is that of Long neurotoxin OH-34 from Ophiophagus hannah (King cobra).